The chain runs to 497 residues: Zinc finger CCCH domain-containing protein 22 (497 aa).

Residues 136–163 (SESMMICKFFMQQRCRFGSSCRSSHGLD) form a C3H1-type zinc finger. The tract at residues 236 to 281 (AQMTDDDGEEEEEEDEQQSASDSEDSVSSDYDEGSPQGIGFLESTN) is disordered. Acidic residues predominate over residues 239 to 268 (TDDDGEEEEEEDEQQSASDSEDSVSSDYDE). Residues 300 to 346 (TRGIASKMMASMGYREGMGLGVSGQGILNPILVKVLPAKRSLDYALE) form the G-patch domain. Residues 352-387 (ECKSEKQKKKRSRGGKRKRGKKFAEAAKAAKQEEES) are disordered. Residues 357–372 (KQKKKRSRGGKRKRGK) show a composition bias toward basic residues. Over residues 373-387 (KFAEAAKAAKQEEES) the composition is skewed to basic and acidic residues.

The polypeptide is Zinc finger CCCH domain-containing protein 22 (Arabidopsis thaliana (Mouse-ear cress)).